A 518-amino-acid polypeptide reads, in one-letter code: Apolipoprotein N-acyltransferase (518 aa).

6 helical membrane passes run 22-42 (LAFI…LWII), 63-83 (FFHW…WVHV), 101-121 (ALLA…LAWF), 134-154 (LLFP…LTGF), 174-194 (IIGA…LALC), and 202-222 (LLIL…LSQI). A CN hydrolase domain is found at 234–484 (VQGNIPQSMK…TGVLSATIPL (251 aa)). Glutamate 273 functions as the Proton acceptor in the catalytic mechanism. Lysine 343 is a catalytic residue. The active-site Nucleophile is the cysteine 395. A helical membrane pass occupies residues 492 to 512 (AKIGQTPLLILCGALLLVGFI).

This sequence belongs to the CN hydrolase family. Apolipoprotein N-acyltransferase subfamily.

It is found in the cell inner membrane. It carries out the reaction N-terminal S-1,2-diacyl-sn-glyceryl-L-cysteinyl-[lipoprotein] + a glycerophospholipid = N-acyl-S-1,2-diacyl-sn-glyceryl-L-cysteinyl-[lipoprotein] + a 2-acyl-sn-glycero-3-phospholipid + H(+). Its pathway is protein modification; lipoprotein biosynthesis (N-acyl transfer). Its function is as follows. Catalyzes the phospholipid dependent N-acylation of the N-terminal cysteine of apolipoprotein, the last step in lipoprotein maturation. The protein is Apolipoprotein N-acyltransferase of Shewanella oneidensis (strain ATCC 700550 / JCM 31522 / CIP 106686 / LMG 19005 / NCIMB 14063 / MR-1).